The sequence spans 305 residues: Tyrosine recombinase XerC (305 aa).

Residues 4 to 95 (TQIQELIIKW…AIKNFYKFLE (92 aa)) enclose the Core-binding (CB) domain. The Tyr recombinase domain occupies 116–298 (LLPKALSEEE…SIKHLETAYV (183 aa)). Residues arginine 159, lysine 182, histidine 250, arginine 253, and histidine 276 contribute to the active site. Tyrosine 285 functions as the O-(3'-phospho-DNA)-tyrosine intermediate in the catalytic mechanism.

Belongs to the 'phage' integrase family. XerC subfamily. Forms a cyclic heterotetrameric complex composed of two molecules of XerC and two molecules of XerD.

It is found in the cytoplasm. In terms of biological role, site-specific tyrosine recombinase, which acts by catalyzing the cutting and rejoining of the recombining DNA molecules. The XerC-XerD complex is essential to convert dimers of the bacterial chromosome into monomers to permit their segregation at cell division. It also contributes to the segregational stability of plasmids. In Rickettsia bellii (strain OSU 85-389), this protein is Tyrosine recombinase XerC.